We begin with the raw amino-acid sequence, 71 residues long: Ranatuerin-2Va (71 aa).

The N-terminal stretch at 1–22 (MFTLKKSFLLLFFLGTITLSLC) is a signal peptide. Residues 23-43 (EQERGADEDDGVEMTEEEVKR) constitute a propeptide that is removed on maturation. Residues Cys-66 and Cys-71 are joined by a disulfide bond.

As to expression, expressed by the skin glands.

The protein resides in the secreted. Its function is as follows. Antimicrobial peptide. The polypeptide is Ranatuerin-2Va (Odorrana versabilis (Chinese bamboo leaf odorous frog)).